The sequence spans 486 residues: Vicilin-like seed storage protein At3g22640 (486 aa).

Positions 1–22 (MAITNKLIITLLLLISIAVVHC) are cleaved as a signal peptide. The disordered stretch occupies residues 34–60 (PPQQGEQEGPRRRPGGGSGEGWEEEST). 2 consecutive Cupin type-1 domains span residues 64-223 (YHFR…ELLG) and 278-448 (FNLF…KVAE). 3 N-linked (GlcNAc...) asparagine glycosylation sites follow: asparagine 168, asparagine 316, and asparagine 455.

It belongs to the 7S seed storage protein family. As to expression, predominantly expressed in the embryo and endosperm of developing seeds. Also present in seedlings.

Functionally, seed storage protein. (Microbial infection) Involved in tobacco mosaic virus (TMV) replication. Required for endoplasmic reticulum (ER) aggregations mediated by TMV main replicase (P126) upon viral infection. The sequence is that of Vicilin-like seed storage protein At3g22640 from Arabidopsis thaliana (Mouse-ear cress).